The primary structure comprises 201 residues: Casparian strip membrane protein 2 (201 aa).

At 1-38 the chain is on the cytoplasmic side; that stretch reads MKSTGEATAINIGETKSASATTVATTKAIQHPKAGLKR. A helical membrane pass occupies residues 39-59; it reads GLAIFDFILRLSAIGAALAAT. Topologically, residues 60–89 are extracellular; that stretch reads TTMGTTDQTLPFFTQFFQFQASYDDLPAFS. Residues 90-110 traverse the membrane as a helical segment; it reads FFVIANAIASGYLFLSLPFSI. At 111–129 the chain is on the cytoplasmic side; it reads VCIVRPHAMGARLLLVICD. Residues 130–150 form a helical membrane-spanning segment; sequence TVMVALTIAAAAAAAAIVYLA. The Extracellular portion of the chain corresponds to 151–175; it reads HNGNSNANWVAICQQFDDFCQSVSG. Residues 176 to 196 form a helical membrane-spanning segment; sequence AVVASFIAAVLFMLMIVLSAF. Residues 197-201 lie on the Cytoplasmic side of the membrane; the sequence is SLRKH.

The protein belongs to the Casparian strip membrane proteins (CASP) family. As to quaternary structure, homodimer and heterodimers.

It is found in the cell membrane. Functionally, regulates membrane-cell wall junctions and localized cell wall deposition. Required for establishment of the Casparian strip membrane domain (CSD) and the subsequent formation of Casparian strips, a cell wall modification of the root endodermis that determines an apoplastic barrier between the intraorganismal apoplasm and the extraorganismal apoplasm and prevents lateral diffusion. The sequence is that of Casparian strip membrane protein 2 from Vitis vinifera (Grape).